The sequence spans 414 residues: Enolase (414 aa).

Gln-162 contributes to the (2R)-2-phosphoglycerate binding site. Residue Glu-204 is the Proton donor of the active site. 3 residues coordinate Mg(2+): Asp-239, Glu-280, and Asp-307. Residues Lys-332, Arg-361, Ser-362, and Lys-383 each contribute to the (2R)-2-phosphoglycerate site. Residue Lys-332 is the Proton acceptor of the active site.

This sequence belongs to the enolase family. Mg(2+) is required as a cofactor.

Its subcellular location is the cytoplasm. The protein localises to the secreted. The protein resides in the cell surface. The catalysed reaction is (2R)-2-phosphoglycerate = phosphoenolpyruvate + H2O. It participates in carbohydrate degradation; glycolysis; pyruvate from D-glyceraldehyde 3-phosphate: step 4/5. Functionally, catalyzes the reversible conversion of 2-phosphoglycerate (2-PG) into phosphoenolpyruvate (PEP). It is essential for the degradation of carbohydrates via glycolysis. This Campylobacter jejuni subsp. doylei (strain ATCC BAA-1458 / RM4099 / 269.97) protein is Enolase.